The primary structure comprises 229 residues: Ribosome maturation factor RimM (229 aa).

Residues 1–37 (MAGHDSGNAKRGRSPSFGVFVRKPVERTSAKGTSDGA) form a disordered region. The PRC barrel domain occupies 148–229 (ADEFYWVDLI…RVVVDWEADY (82 aa)).

It belongs to the RimM family. As to quaternary structure, binds ribosomal protein uS19.

Its subcellular location is the cytoplasm. In terms of biological role, an accessory protein needed during the final step in the assembly of 30S ribosomal subunit, possibly for assembly of the head region. Essential for efficient processing of 16S rRNA. May be needed both before and after RbfA during the maturation of 16S rRNA. It has affinity for free ribosomal 30S subunits but not for 70S ribosomes. This Burkholderia pseudomallei (strain 668) protein is Ribosome maturation factor RimM.